We begin with the raw amino-acid sequence, 288 residues long: Probable HTH-type transcriptional regulator STM3175 (288 aa).

In terms of domain architecture, HTH araC/xylS-type spans 14 to 113; it reads RRVCDHIERH…GQSPRRFRQS (100 aa). 2 DNA-binding regions (H-T-H motif) span residues 31–52 and 80–103; these read EALS…TTWS and VIDI…KTAF. Residues 111–288 form a putative effector binding domain; binds the peptide antibiotic albicidin region; that stretch reads RQSPDWLAWH…LLTDIYLPLR (178 aa).

As to quaternary structure, homodimer.

In terms of biological role, probable transcription factor. This is Probable HTH-type transcriptional regulator STM3175 from Salmonella typhimurium (strain LT2 / SGSC1412 / ATCC 700720).